We begin with the raw amino-acid sequence, 868 residues long: Lysosomal cholesterol signaling protein (868 aa).

Residues Met1 to Ser36 are Lumenal-facing. Residues Met1 to Met368 form a PIN-like transporter region. 3 N-linked (GlcNAc...) asparagine glycosylation sites follow: Asn9, Asn17, and Asn27. Residues Ile37 to Ala57 form a helical membrane-spanning segment. Cholesterol is bound by residues Phe41 and Tyr55. Residues Gly58–Arg77 are Cytoplasmic-facing. Residues Phe78–Trp98 form a helical membrane-spanning segment. Residues Ala99–Tyr102 are Lumenal-facing. A helical membrane pass occupies residues Ser103–Ala123. The Cytoplasmic segment spans residues Ser124–Lys131. The chain crosses the membrane as a discontinuously helical span at residues Ala132–Val152. At Glu153–Gln165 the chain is on the lumenal side. Residues Tyr166–Cys186 form a helical membrane-spanning segment. Topologically, residues Glu187–Arg211 are cytoplasmic. The discontinuously helical transmembrane segment at Val212–Asp232 threads the bilayer. Over Lys233–Asn241 the chain is Lumenal. Residues Phe242–Met262 form a discontinuously helical membrane-spanning segment. Residues Val263 to Lys271 are Cytoplasmic-facing. Cholesterol-binding residues include Gly264, Lys265, and Ile266. A helical transmembrane segment spans residues Ser272–Cys292. The Lumenal portion of the chain corresponds to Arg293–Asn313. An N-linked (GlcNAc...) asparagine glycan is attached at Asn307. The chain crosses the membrane as a discontinuously helical span at residues Tyr314 to Phe334. Residues Asn335 to Gly344 lie on the Cytoplasmic side of the membrane. Residues Met345–Phe365 form a helical membrane-spanning segment. The Lumenal segment spans residues Pro366–Asn379. The GPCR stretch occupies residues Gln378–Leu715. N-linked (GlcNAc...) asparagine glycosylation occurs at Asn379. The chain crosses the membrane as a helical span at residues Val380 to Leu400. Residues Leu401–Leu412 lie on the Cytoplasmic side of the membrane. The chain crosses the membrane as a helical span at residues Thr413–Val433. The Lumenal segment spans residues Lys434–Lys436. Residues Asn437–Leu457 traverse the membrane as a helical segment. Topologically, residues Trp458–Pro478 are cytoplasmic. A helical membrane pass occupies residues Val479–Ile499. Residues Thr500–Gln518 lie on the Lumenal side of the membrane. The chain crosses the membrane as a helical span at residues Met519–Cys539. Residues Met540–Leu658 are Cytoplasmic-facing. Residues Glu550 to Pro582 form a disordered region. Arg655 contributes to the cholesterol binding site. Residues Leu659 to Phe679 traverse the membrane as a helical segment. Topologically, residues Asn680–Glu689 are lumenal. The chain crosses the membrane as a helical span at residues Leu690–Gly710. The Cytoplasmic portion of the chain corresponds to Leu711 to Thr868. Residues Tyr755–Gln833 enclose the DEP domain. Residues Pro836–Thr868 are disordered. Residues Thr844–Gly857 show a composition bias toward basic and acidic residues.

In terms of assembly, homodimer; via the transporter region and DEP domain. Interacts with the GATOR1 complex; preventing interaction between GATOR1 and KICSTOR; interaction is disrupted upon cholesterol starvation. Widely expressed in adult tissues and during development. In brain, widely distributed in forebrain regions, while it shows a more restricted distribution in the midbrain and hindbrain regions. Expressed at highest level in the lateral part of striatum and hippocampus.

The protein localises to the lysosome membrane. Cholesterol-binding protein that acts as a regulator of mTORC1 signaling pathway. Acts as a sensor of cholesterol to signal cholesterol sufficiency to mTORC1: in presence of cholesterol, binds cholesterol, leading to disruption of the interaction between the GATOR1 and KICSTOR complexes and promotion of mTORC1 signaling. Upon cholesterol starvation, GPR155/LYCHOS is unable to perturb the association between GATOR1 and KICSTOR, leading to mTORC1 signaling inhibition. Binds indole-3-acetic acid and may play a role in tryptophan metabolism. This Mus musculus (Mouse) protein is Lysosomal cholesterol signaling protein.